The chain runs to 459 residues: Interleukin-7 receptor subunit alpha (459 aa).

Residues 1-20 (MMALGRAFAIVFCLIQAVSG) form the signal peptide. The Extracellular portion of the chain corresponds to 21-239 (ESGNAQDGDL…PEPKNQGGWD (219 aa)). Cys-42 and Cys-57 are disulfide-bonded. An N-linked (GlcNAc...) asparagine glycan is attached at Asn-60. 2 cysteine pairs are disulfide-bonded: Cys-74–Cys-82 and Cys-108–Cys-118. N-linked (GlcNAc...) asparagine glycosylation is found at Asn-115 and Asn-177. Positions 131 to 232 (APSDLKVVYR…PSSTFETPEP (102 aa)) constitute a Fibronectin type-III domain. The short motif at 218–222 (WSEWS) is the WSXWS motif element. The chain crosses the membrane as a helical span at residues 240-264 (PVLPSVTILSLFSVFLLVILAHVLW). Topologically, residues 265–459 (KKRIKPVVWP…VTMSSFYQNK (195 aa)) are cytoplasmic. The Box 1 motif motif lies at 272 to 280 (VWPSLPDHK). Thr-282 carries the post-translational modification Phosphothreonine; by PKC. Disordered stretches follow at residues 337-365 (TQGHRAAVHSANRSPETSVSPPETVRRES) and 378-413 (NAPPLLSSRSPDYRDGDRNRPPVYQDLLPNSGNTNV). The span at 347–357 (ANRSPETSVSP) shows a compositional bias: polar residues. The segment covering 388 to 397 (PDYRDGDRNR) has biased composition (basic and acidic residues).

The protein belongs to the type I cytokine receptor family. Type 4 subfamily. In terms of assembly, the IL7 receptor is a heterodimer of IL7R and IL2RG. The TSLP receptor is a heterodimer of CRLF2 and IL7R. Interacts with CD53. N-glycosylated IL-7Ralpha binds IL7 300-fold more tightly than the unglycosylated form. Post-translationally, ubiquitinated by MARCHF8; leading to lysosomal degradation. In terms of tissue distribution, spleen, thymus and fetal liver.

It localises to the membrane. In terms of biological role, receptor for interleukin-7. Also acts as a receptor for thymic stromal lymphopoietin (TSLP). This chain is Interleukin-7 receptor subunit alpha (Il7r), found in Mus musculus (Mouse).